The sequence spans 97 residues: Putative defensin-like protein 237 (97 aa).

An N-terminal signal peptide occupies residues 1–23 (MRHATSPIVFCFLIFLVMNHVKG). Intrachain disulfides connect Cys-30–Cys-94, Cys-40–Cys-71, Cys-48–Cys-84, and Cys-69–Cys-86.

Belongs to the DEFL family.

It localises to the secreted. In Arabidopsis thaliana (Mouse-ear cress), this protein is Putative defensin-like protein 237 (SCRL21).